The sequence spans 386 residues: Protein lin-8 (386 aa).

The segment at Leu-175–Ser-285 is sufficient for interaction with lin-35. A disordered region spans residues Glu-212–Lys-240. Over residues Pro-229–Lys-240 the composition is skewed to low complexity.

It belongs to the lin-8 family. As to quaternary structure, interacts with lin-35 (via C-terminus). Widely expressed throughout development, with particularly prominent expression in the germline and in neuronal nuclei of the head (at protein level).

Its subcellular location is the nucleus. Functionally, acts as a synthetic multivulva class A (synMuvA) protein and redundantly inhibits lin-3/EGF expression to prevent inappropriate vulva induction. The protein is Protein lin-8 of Caenorhabditis elegans.